The sequence spans 115 residues: NADH-ubiquinone oxidoreductase chain 3 (115 aa).

3 helical membrane-spanning segments follow: residues 4 to 24 (FIVLLVNISLASCLILIAFWL), 55 to 75 (FFLVAITFLLFDLEIALLLPL), and 87 to 107 (TMLTSFILVSVLAMGLAYEWL).

It belongs to the complex I subunit 3 family. As to quaternary structure, core subunit of respiratory chain NADH dehydrogenase (Complex I) which is composed of 45 different subunits. Interacts with TMEM186. Interacts with TMEM242.

The protein localises to the mitochondrion inner membrane. The catalysed reaction is a ubiquinone + NADH + 5 H(+)(in) = a ubiquinol + NAD(+) + 4 H(+)(out). In terms of biological role, core subunit of the mitochondrial membrane respiratory chain NADH dehydrogenase (Complex I) which catalyzes electron transfer from NADH through the respiratory chain, using ubiquinone as an electron acceptor. Essential for the catalytic activity of complex I. This chain is NADH-ubiquinone oxidoreductase chain 3, found in Reithrodontomys megalotis (Western harvest mouse).